Here is a 196-residue protein sequence, read N- to C-terminus: uncharacterized protein (196 aa).

Residues 1 to 21 form the signal peptide; that stretch reads MNGKQCFCFFLFHLFYTGLFA. Residue Cys-22 is the site of N-palmitoyl cysteine attachment. A lipid anchor (S-diacylglycerol cysteine) is attached at Cys-22.

It localises to the cell membrane. This is an uncharacterized protein from Treponema pallidum (strain Nichols).